Here is a 619-residue protein sequence, read N- to C-terminus: CREB-regulated transcription coactivator 3 (619 aa).

The segment at 1-103 is required for interaction with HTLV-1 TAX; it reads MAASPGSGSA…LVERPSRNRF (103 aa). 2 positions are modified to phosphoserine: S4 and S62. The interval 103–150 is disordered; that stretch reads FHPLHRRSGDKPGRQFDGSAFGANYSSQPLDESWPRQQPPWKDEKHPG. A Phosphothreonine modification is found at T160. S162 is modified (phosphoserine; by SIK2). The span at 165–175 shows a compositional bias: polar residues; the sequence is ALHTSALSTKP. Positions 165–185 are disordered; it reads ALHTSALSTKPQDPYGGGGQS. A Glycyl lysine isopeptide (Lys-Gly) (interchain with G-Cter in SUMO2) cross-link involves residue K232. A phosphoserine mark is found at S273, S329, S332, S370, S391, S396, S410, and S443. The disordered stretch occupies residues 375–431; the sequence is STTNLSGPSRRRQPPVSPLTLSPGPEAHQGFSRQLSSTSPLAPYPTSQMVSSDRSQL. Positions 380-401 are required for interaction with PPP2CA and PPP2R1A; it reads SGPSRRRQPPVSPLTLSPGPEA. Residues 405–431 are compositionally biased toward polar residues; that stretch reads FSRQLSSTSPLAPYPTSQMVSSDRSQL.

This sequence belongs to the TORC family. Binding, as a tetramer, through its N-terminal region, with the bZIP domain of CREB1 enhances recruitment of TAF4 to the promoter. 'Arg-314' in the bZIP domain of CREB1 is essential for this interaction. Interacts (when phosphorylated at Ser-162 and Se-273) with 14-3-3 proteins. Interacts with YWHAE. Interacts (when phosphorylated at Ser-391) with phosphatase PP2A catalytic subunit PPP2CA and regulatory subunits PPP2R1A and PPP2R2A. Interacts, via the N-terminal with the ankyrin repeats of BCL3, to form a complex with CREB1 on CRE and TxRE responsive elements and represses HTLV-1 LTR-mediated transcription. In terms of assembly, (Microbial infection) Interacts with HTLV-1 protein Tax; this interaction enhances tax transcriptional activity. Post-translationally, phosphorylation/dephosphorylation states of Ser-273 are required for regulating transduction of CREB activity. CRTCs/TORCs are inactive when phosphorylated, and active when dephosphorylated at this site. May be phosphorylated at Ser-391 by MAPK3/ERK1 and/or MAPK1/ERK2 or by some cyclin-dependent kinases such as CDK1,CDK2 or CDK5. Following adenylyl cyclase activation, dephosphorylated at Ser-162 and Ser-273 resulting in its dissociation from 14-3-3 proteins probably promoting CRTC3 translocation into the nucleus. Predominantly expressed in B and T lymphocytes. Highest levels in lung. Also expressed in brain, colon, heart, kidney, ovary, and prostate. Weak expression in liver, pancreas, muscle, small intestine, spleen and stomach.

The protein localises to the nucleus. It is found in the cytoplasm. Transcriptional coactivator for CREB1 which activates transcription through both consensus and variant cAMP response element (CRE) sites. Acts as a coactivator, in the SIK/TORC signaling pathway, being active when dephosphorylated and acts independently of CREB1 'Ser-133' phosphorylation. Enhances the interaction of CREB1 with TAF4. Regulates the expression of specific CREB-activated genes such as the steroidogenic gene, StAR. Potent coactivator of PPARGC1A and inducer of mitochondrial biogenesis in muscle cells. Also coactivator for TAX activation of the human T-cell leukemia virus type 1 (HTLV-1) long terminal repeats (LTR). The sequence is that of CREB-regulated transcription coactivator 3 (CRTC3) from Homo sapiens (Human).